The following is a 148-amino-acid chain: Large ribosomal subunit protein uL15B (148 aa).

2 stretches are compositionally biased toward basic residues: residues 1-13 (MPTH…KLRG) and 21-31 (RIGKHRKHPGG). The interval 1 to 38 (MPTHTSKTRKLRGHVSAGHGRIGKHRKHPGGRGKAGGL) is disordered. Phosphotyrosine is present on Tyr108.

It belongs to the universal ribosomal protein uL15 family. Component of the large ribosomal subunit (LSU). Mature yeast ribosomes consist of a small (40S) and a large (60S) subunit. The 40S small subunit contains 1 molecule of ribosomal RNA (18S rRNA) and at least 33 different proteins. The large 60S subunit contains 3 rRNA molecules (25S, 5.8S and 5S rRNA) and at least 46 different proteins.

It is found in the cytoplasm. The protein localises to the nucleus. It localises to the nucleolus. In terms of biological role, component of the ribosome, a large ribonucleoprotein complex responsible for the synthesis of proteins in the cell. The small ribosomal subunit (SSU) binds messenger RNAs (mRNAs) and translates the encoded message by selecting cognate aminoacyl-transfer RNA (tRNA) molecules. The large subunit (LSU) contains the ribosomal catalytic site termed the peptidyl transferase center (PTC), which catalyzes the formation of peptide bonds, thereby polymerizing the amino acids delivered by tRNAs into a polypeptide chain. The nascent polypeptides leave the ribosome through a tunnel in the LSU and interact with protein factors that function in enzymatic processing, targeting, and the membrane insertion of nascent chains at the exit of the ribosomal tunnel. This Schizosaccharomyces pombe (strain 972 / ATCC 24843) (Fission yeast) protein is Large ribosomal subunit protein uL15B (rpl2801).